The primary structure comprises 224 residues: ATP-dependent dethiobiotin synthetase BioD (224 aa).

Residue 14 to 19 (GIGKTV) participates in ATP binding. Mg(2+) is bound at residue T18. K39 is an active-site residue. A substrate-binding site is contributed by S43. Residues D56, 117 to 120 (EGVG), and 177 to 178 (NE) each bind ATP. Residues D56 and E117 each contribute to the Mg(2+) site.

The protein belongs to the dethiobiotin synthetase family. In terms of assembly, homodimer. The cofactor is Mg(2+).

The protein resides in the cytoplasm. It catalyses the reaction (7R,8S)-7,8-diammoniononanoate + CO2 + ATP = (4R,5S)-dethiobiotin + ADP + phosphate + 3 H(+). The protein operates within cofactor biosynthesis; biotin biosynthesis; biotin from 7,8-diaminononanoate: step 1/2. Its function is as follows. Catalyzes a mechanistically unusual reaction, the ATP-dependent insertion of CO2 between the N7 and N8 nitrogen atoms of 7,8-diaminopelargonic acid (DAPA, also called 7,8-diammoniononanoate) to form a ureido ring. The sequence is that of ATP-dependent dethiobiotin synthetase BioD from Xanthomonas campestris pv. campestris (strain 8004).